We begin with the raw amino-acid sequence, 158 residues long: 2-C-methyl-D-erythritol 2,4-cyclodiphosphate synthase (158 aa).

The a divalent metal cation site is built by Asp-9 and His-11. 4-CDP-2-C-methyl-D-erythritol 2-phosphate-binding positions include 9–11 (DVH) and 35–36 (HS). An a divalent metal cation-binding site is contributed by His-43. Residues 57–59 (DIG), 62–66 (FPDTD), 101–107 (AQAPKMA), 133–136 (TTTE), Phe-140, and Arg-143 contribute to the 4-CDP-2-C-methyl-D-erythritol 2-phosphate site.

Belongs to the IspF family. As to quaternary structure, homotrimer. Requires a divalent metal cation as cofactor.

It catalyses the reaction 4-CDP-2-C-methyl-D-erythritol 2-phosphate = 2-C-methyl-D-erythritol 2,4-cyclic diphosphate + CMP. The protein operates within isoprenoid biosynthesis; isopentenyl diphosphate biosynthesis via DXP pathway; isopentenyl diphosphate from 1-deoxy-D-xylulose 5-phosphate: step 4/6. In terms of biological role, involved in the biosynthesis of isopentenyl diphosphate (IPP) and dimethylallyl diphosphate (DMAPP), two major building blocks of isoprenoid compounds. Catalyzes the conversion of 4-diphosphocytidyl-2-C-methyl-D-erythritol 2-phosphate (CDP-ME2P) to 2-C-methyl-D-erythritol 2,4-cyclodiphosphate (ME-CPP) with a corresponding release of cytidine 5-monophosphate (CMP). In Vibrio cholerae serotype O1 (strain ATCC 39541 / Classical Ogawa 395 / O395), this protein is 2-C-methyl-D-erythritol 2,4-cyclodiphosphate synthase.